A 459-amino-acid polypeptide reads, in one-letter code: Inositol-trisphosphate 3-kinase A (459 aa).

Positions 1–26 are disordered; the sequence is MTLPGHPTGMARPRGAGPCSPGLERA. Arginine 35, arginine 55, and arginine 62 each carry omega-N-methylarginine. Residues 49–164 are disordered; the sequence is AAAGEPRARG…TSEDVGQKSH (116 aa). The segment covering 116–132 has biased composition (low complexity); sequence RRLSTSSLSSTGSSSLL. Serine 135 and serine 195 each carry phosphoserine. ATP is bound by residues serine 195, lysine 207, 247 to 249, and aspartate 260; that span reads QDL. Residues lysine 262 and arginine 283 each contribute to the substrate site. The tract at residues 285–293 is calmodulin-binding; the sequence is DMYKKMLAV. 310–317 contacts substrate; the sequence is KPRYMQWR. Residues lysine 334 and aspartate 414 each contribute to the ATP site. Substrate is bound at residue lysine 417.

This sequence belongs to the inositol phosphokinase (IPK) family.

The protein localises to the cytoplasm. The protein resides in the cytoskeleton. It carries out the reaction 1D-myo-inositol 1,4,5-trisphosphate + ATP = 1D-myo-inositol 1,3,4,5-tetrakisphosphate + ADP + H(+). With respect to regulation, activated by calcium/calmodulin. In terms of biological role, catalyzes the phosphorylation of 1D-myo-inositol 1,4,5-trisphosphate (InsP3) into 1D-myo-inositol 1,3,4,5-tetrakisphosphate and participates to the regulation of calcium homeostasis. This Rattus norvegicus (Rat) protein is Inositol-trisphosphate 3-kinase A.